The chain runs to 556 residues: 2-succinyl-5-enolpyruvyl-6-hydroxy-3-cyclohexene-1-carboxylate synthase (556 aa).

It belongs to the TPP enzyme family. MenD subfamily. As to quaternary structure, homodimer. Requires Mg(2+) as cofactor. It depends on Mn(2+) as a cofactor. Thiamine diphosphate is required as a cofactor.

It carries out the reaction isochorismate + 2-oxoglutarate + H(+) = 5-enolpyruvoyl-6-hydroxy-2-succinyl-cyclohex-3-ene-1-carboxylate + CO2. It functions in the pathway quinol/quinone metabolism; 1,4-dihydroxy-2-naphthoate biosynthesis; 1,4-dihydroxy-2-naphthoate from chorismate: step 2/7. It participates in quinol/quinone metabolism; menaquinone biosynthesis. Catalyzes the thiamine diphosphate-dependent decarboxylation of 2-oxoglutarate and the subsequent addition of the resulting succinic semialdehyde-thiamine pyrophosphate anion to isochorismate to yield 2-succinyl-5-enolpyruvyl-6-hydroxy-3-cyclohexene-1-carboxylate (SEPHCHC). The protein is 2-succinyl-5-enolpyruvyl-6-hydroxy-3-cyclohexene-1-carboxylate synthase of Salmonella typhimurium (strain LT2 / SGSC1412 / ATCC 700720).